Reading from the N-terminus, the 265-residue chain is Signal peptidase I (265 aa).

At 1 to 19 (MQIDTKTNTNKTTAQEWKS) the chain is on the cytoplasmic side. The helical transmembrane segment at 20 to 40 (FAFVVCIALLIRILIMEPFTV) threads the bilayer. At 41–265 (PTGSMKATIL…IFRNLYNTDE (225 aa)) the chain is on the periplasmic side. Catalysis depends on residues Ser44 and Lys107.

Belongs to the peptidase S26 family.

Its subcellular location is the cell inner membrane. It carries out the reaction Cleavage of hydrophobic, N-terminal signal or leader sequences from secreted and periplasmic proteins.. This chain is Signal peptidase I (lepB), found in Rickettsia canadensis (strain McKiel).